The chain runs to 205 residues: ITG-like peptide (205 aa).

An N-terminal signal peptide occupies residues 1–15 (MRVYAAITLVLVANT). 2 consecutive propeptides follow at residues 16–188 (AYIG…TSGE) and 202–205 (MPFA).

Expressed throughout the nervous system (at protein level).

The protein localises to the secreted. The protein is ITG-like peptide of Camponotus floridanus (Florida carpenter ant).